The sequence spans 247 residues: ATP synthase subunit a, chloroplastic (247 aa).

Transmembrane regions (helical) follow at residues 38 to 58, 95 to 115, 134 to 154, 199 to 219, and 220 to 240; these read QVLI…ILII, VPFI…GALL, INTT…AGLS, LVVV…VMFL, and GLFT…AYIG.

This sequence belongs to the ATPase A chain family. F-type ATPases have 2 components, CF(1) - the catalytic core - and CF(0) - the membrane proton channel. CF(1) has five subunits: alpha(3), beta(3), gamma(1), delta(1), epsilon(1). CF(0) has four main subunits: a, b, b' and c.

The protein resides in the plastid. It is found in the chloroplast thylakoid membrane. Key component of the proton channel; it plays a direct role in the translocation of protons across the membrane. This Glycine max (Soybean) protein is ATP synthase subunit a, chloroplastic.